The sequence spans 100 residues: Urease subunit gamma (100 aa).

This sequence belongs to the urease gamma subunit family. As to quaternary structure, heterotrimer of UreA (gamma), UreB (beta) and UreC (alpha) subunits. Three heterotrimers associate to form the active enzyme.

It is found in the cytoplasm. It catalyses the reaction urea + 2 H2O + H(+) = hydrogencarbonate + 2 NH4(+). Its pathway is nitrogen metabolism; urea degradation; CO(2) and NH(3) from urea (urease route): step 1/1. The polypeptide is Urease subunit gamma (Bordetella pertussis (strain Tohama I / ATCC BAA-589 / NCTC 13251)).